The primary structure comprises 297 residues: Homoserine kinase (297 aa).

79–89 (PIARGLGSSGA) contacts ATP.

The protein belongs to the GHMP kinase family. Homoserine kinase subfamily.

It is found in the cytoplasm. The catalysed reaction is L-homoserine + ATP = O-phospho-L-homoserine + ADP + H(+). Its pathway is amino-acid biosynthesis; L-threonine biosynthesis; L-threonine from L-aspartate: step 4/5. Catalyzes the ATP-dependent phosphorylation of L-homoserine to L-homoserine phosphate. In Pyrobaculum neutrophilum (strain DSM 2338 / JCM 9278 / NBRC 100436 / V24Sta) (Thermoproteus neutrophilus), this protein is Homoserine kinase.